The sequence spans 317 residues: MLLYRSAAWFAKGLREYTKSGYESASKDFVPDDLEVQVPGRAFMVTGGNSGIGKATAMEIAKRGGTVHLVCRDHSRAEGAKAEIIRESGNQNIFLHIVDLSLPKSVWKFVENFKQEHTLNVLINNAGCMVNKRELTEDGLEKNFATNTLGVYVLTTALIPVLEKEHDPRVITVSSGGMLVQKLNTDDPQSERTAFDGTMVYAQNKRQQVVLTERWARAHPAIHFSCMHPGWVDTPGVRLSMPGFHARLGARLRSEAQGADTVLWLALAPAATAQPSGCFFQDRKPAPTHLPLARTSSSPAEEEKLIEILEELARRFK.

NAD(+)-binding residues include Ser50 and Ile52. Residue Ser175 coordinates substrate. The NAD(+) site is built by Tyr201, Lys205, and Thr234. The active-site Proton acceptor is the Tyr201.

This sequence belongs to the short-chain dehydrogenases/reductases (SDR) family.

Its function is as follows. Putative oxidoreductase. The polypeptide is Dehydrogenase/reductase SDR family member 12 (DHRS12) (Bos taurus (Bovine)).